A 388-amino-acid chain; its full sequence is Succinate--CoA ligase [ADP-forming] subunit beta (388 aa).

An ATP-grasp domain is found at 9–244 (KQLFAEYGLP…PSQDDPREAH (236 aa)). Residues lysine 46, 53–55 (GRG), glutamate 99, threonine 102, and glutamate 107 each bind ATP. Mg(2+) contacts are provided by asparagine 199 and aspartate 213. Residues asparagine 264 and 321 to 323 (GIV) contribute to the substrate site.

It belongs to the succinate/malate CoA ligase beta subunit family. Heterotetramer of two alpha and two beta subunits. Mg(2+) is required as a cofactor.

The catalysed reaction is succinate + ATP + CoA = succinyl-CoA + ADP + phosphate. It catalyses the reaction GTP + succinate + CoA = succinyl-CoA + GDP + phosphate. Its pathway is carbohydrate metabolism; tricarboxylic acid cycle; succinate from succinyl-CoA (ligase route): step 1/1. Succinyl-CoA synthetase functions in the citric acid cycle (TCA), coupling the hydrolysis of succinyl-CoA to the synthesis of either ATP or GTP and thus represents the only step of substrate-level phosphorylation in the TCA. The beta subunit provides nucleotide specificity of the enzyme and binds the substrate succinate, while the binding sites for coenzyme A and phosphate are found in the alpha subunit. The sequence is that of Succinate--CoA ligase [ADP-forming] subunit beta from Pseudomonas fluorescens (strain SBW25).